A 331-amino-acid chain; its full sequence is Aspartate carbamoyltransferase catalytic subunit (331 aa).

The carbamoyl phosphate site is built by Arg-76 and Thr-77. Lys-104 is a binding site for L-aspartate. 3 residues coordinate carbamoyl phosphate: Arg-126, His-154, and Gln-157. L-aspartate contacts are provided by Arg-187 and Arg-246. Gly-287 and Pro-288 together coordinate carbamoyl phosphate.

This sequence belongs to the aspartate/ornithine carbamoyltransferase superfamily. ATCase family. In terms of assembly, heterododecamer (2C3:3R2) of six catalytic PyrB chains organized as two trimers (C3), and six regulatory PyrI chains organized as three dimers (R2).

It catalyses the reaction carbamoyl phosphate + L-aspartate = N-carbamoyl-L-aspartate + phosphate + H(+). Its pathway is pyrimidine metabolism; UMP biosynthesis via de novo pathway; (S)-dihydroorotate from bicarbonate: step 2/3. Its function is as follows. Catalyzes the condensation of carbamoyl phosphate and aspartate to form carbamoyl aspartate and inorganic phosphate, the committed step in the de novo pyrimidine nucleotide biosynthesis pathway. The polypeptide is Aspartate carbamoyltransferase catalytic subunit (Dehalococcoides mccartyi (strain CBDB1)).